The sequence spans 313 residues: MSENFQHKTVLLDEAVAGLNLRSDGIYIDGTFGRGGHSRLILSQLGAEGRLIAIDRDPQAIAAAAQIDDPRFSIIHGPFSALADYVQEMGLSSRIDGILLDLGVSSPQLDDPERGFSFMRDGPLDMRMDPSRGLSAAQWLMQAEEDDIAWVLKTFGEERFAKRIARAIVERNRTEPLSRTRELAALISDASPFKEKHKHPATRSFQAIRIYINSELDEIERALEGALVALAPQGRLSVISFHSLEDRLVKRFIRQYSRGPQVPKGLPLTEAQLQAQGGPQLKALGKRMPGEREVVDNPRARSSVLRVAERIAR.

S-adenosyl-L-methionine contacts are provided by residues 35 to 37 (GGH), aspartate 55, phenylalanine 79, aspartate 101, and glutamine 108.

It belongs to the methyltransferase superfamily. RsmH family.

The protein localises to the cytoplasm. It carries out the reaction cytidine(1402) in 16S rRNA + S-adenosyl-L-methionine = N(4)-methylcytidine(1402) in 16S rRNA + S-adenosyl-L-homocysteine + H(+). In terms of biological role, specifically methylates the N4 position of cytidine in position 1402 (C1402) of 16S rRNA. In Edwardsiella ictaluri (strain 93-146), this protein is Ribosomal RNA small subunit methyltransferase H.